A 440-amino-acid chain; its full sequence is Ribulose bisphosphate carboxylase large chain (440 aa).

An N6,N6,N6-trimethyllysine modification is found at lysine 4. Substrate is bound by residues asparagine 113 and threonine 163. Lysine 165 serves as the catalytic Proton acceptor. Lysine 167 serves as a coordination point for substrate. Residues lysine 191, aspartate 193, and glutamate 194 each contribute to the Mg(2+) site. Position 191 is an N6-carboxylysine (lysine 191). Histidine 284 (proton acceptor) is an active-site residue. 3 residues coordinate substrate: arginine 285, histidine 317, and serine 369.

It belongs to the RuBisCO large chain family. Type I subfamily. In terms of assembly, heterohexadecamer of 8 large chains and 8 small chains; disulfide-linked. The disulfide link is formed within the large subunit homodimers. Mg(2+) is required as a cofactor. Post-translationally, the disulfide bond which can form in the large chain dimeric partners within the hexadecamer appears to be associated with oxidative stress and protein turnover.

Its subcellular location is the plastid. The protein resides in the chloroplast. The enzyme catalyses 2 (2R)-3-phosphoglycerate + 2 H(+) = D-ribulose 1,5-bisphosphate + CO2 + H2O. It carries out the reaction D-ribulose 1,5-bisphosphate + O2 = 2-phosphoglycolate + (2R)-3-phosphoglycerate + 2 H(+). Its function is as follows. RuBisCO catalyzes two reactions: the carboxylation of D-ribulose 1,5-bisphosphate, the primary event in carbon dioxide fixation, as well as the oxidative fragmentation of the pentose substrate in the photorespiration process. Both reactions occur simultaneously and in competition at the same active site. The sequence is that of Ribulose bisphosphate carboxylase large chain from Pteris vittata (Chinese ladder brake).